Consider the following 457-residue polypeptide: Ribosomal protein uS12 methylthiotransferase RimO (457 aa).

The MTTase N-terminal domain occupies 30 to 140 (PTIGMVSLGC…VLDAVHGAVP (111 aa)). [4Fe-4S] cluster is bound by residues Cys39, Cys75, Cys104, Cys171, Cys175, and Cys178. Residues 157 to 386 (LTPRHFSYLK…MQKAQAISEA (230 aa)) form the Radical SAM core domain. A TRAM domain is found at 389–456 (AARIGQRLEV…EYDLWGRAVL (68 aa)).

This sequence belongs to the methylthiotransferase family. RimO subfamily. [4Fe-4S] cluster is required as a cofactor.

The protein localises to the cytoplasm. The catalysed reaction is L-aspartate(89)-[ribosomal protein uS12]-hydrogen + (sulfur carrier)-SH + AH2 + 2 S-adenosyl-L-methionine = 3-methylsulfanyl-L-aspartate(89)-[ribosomal protein uS12]-hydrogen + (sulfur carrier)-H + 5'-deoxyadenosine + L-methionine + A + S-adenosyl-L-homocysteine + 2 H(+). Functionally, catalyzes the methylthiolation of an aspartic acid residue of ribosomal protein uS12. In Cereibacter sphaeroides (strain ATCC 17025 / ATH 2.4.3) (Rhodobacter sphaeroides), this protein is Ribosomal protein uS12 methylthiotransferase RimO.